The sequence spans 215 residues: Oligoribonuclease (215 aa).

The 166-residue stretch at 5–170 (LVWIDCEMTG…ADIHESIREL (166 aa)) folds into the Exonuclease domain. Tyrosine 127 is an active-site residue. The segment at 196 to 215 (LDEGKDAPGPSDSASAPPTG) is disordered. Positions 202–215 (APGPSDSASAPPTG) are enriched in low complexity.

The protein belongs to the oligoribonuclease family.

It localises to the cytoplasm. Functionally, 3'-to-5' exoribonuclease specific for small oligoribonucleotides. In Mycobacterium avium (strain 104), this protein is Oligoribonuclease.